The primary structure comprises 166 residues: Protein-export protein SecB (166 aa).

Belongs to the SecB family. Homotetramer, a dimer of dimers. One homotetramer interacts with 1 SecA dimer.

The protein localises to the cytoplasm. Functionally, one of the proteins required for the normal export of preproteins out of the cell cytoplasm. It is a molecular chaperone that binds to a subset of precursor proteins, maintaining them in a translocation-competent state. It also specifically binds to its receptor SecA. The sequence is that of Protein-export protein SecB from Actinobacillus succinogenes (strain ATCC 55618 / DSM 22257 / CCUG 43843 / 130Z).